A 108-amino-acid polypeptide reads, in one-letter code: Ig kappa chain V-V region HP 123E6 (108 aa).

A framework-1 region spans residues 1–23; the sequence is DIQMTQSTSSLSASLGDRVTISC. A disulfide bridge links Cys-23 with Cys-88. The segment at 24–34 is complementarity-determining-1; it reads RASQDISNYLN. The tract at residues 35 to 49 is framework-2; the sequence is WYQQKPDGTVKLLIY. Residues 50 to 56 form a complementarity-determining-2 region; the sequence is YTSRLHS. The tract at residues 57 to 88 is framework-3; the sequence is GVPSRFSGSGSGTDYSLTISNLEQEDIATYFC. Residues 89-97 form a complementarity-determining-3 region; sequence QQGYMLPRT. Residues 98 to 108 are framework-4; the sequence is FGGGTKLEIKR.

This Mus musculus (Mouse) protein is Ig kappa chain V-V region HP 123E6.